Here is a 1240-residue protein sequence, read N- to C-terminus: Neurofascin (1240 aa).

The signal sequence occupies residues 1–24 (MARQQAPPWVHIALILFLLSLGGA). The Extracellular segment spans residues 25–1110 (IEIPMDPSIQ…NQADIATQGW (1086 aa)). 6 consecutive Ig-like C2-type domains span residues 41–137 (PTIT…LQVS), 143–230 (PKEN…NPFT), 244–332 (PSFM…ISVR), 337–424 (PYWL…AFVS), 430–517 (PRML…VRLE), and 521–603 (PTRI…QDLA). Cystine bridges form between Cys63-Cys118, Cys162-Cys213, Cys268-Cys316, and Cys358-Cys408. N-linked (GlcNAc...) asparagine glycosylation is present at Asn305. 2 N-linked (GlcNAc...) asparagine glycosylation sites follow: Asn409 and Asn446. 2 disulfides stabilise this stretch: Cys452/Cys501 and Cys543/Cys592. Position 481 is a phosphotyrosine (Tyr481). Asn483 is a glycosylation site (N-linked (GlcNAc...) asparagine). Position 485 is a phosphoserine (Ser485). Fibronectin type-III domains lie at 630 to 725 (RPRD…TSGA), 727 to 823 (PESN…SGED), 827 to 923 (APRR…PNEA), and 1007 to 1099 (APDE…TAYT). The tract at residues 710–740 (SSHPSLPSERYRTSGAPPESNPSDVKGEGTR) is disordered. N-linked (GlcNAc...) asparagine glycosylation is found at Asn752, Asn778, Asn866, and Asn881. Residues 902-942 (ARTQVGSGEAATEESPAPPNEATPTAAPPTLPPTTVGTTGL) are disordered. The span at 907–916 (GSGEAATEES) shows a compositional bias: low complexity. Residues 917 to 933 (PAPPNEATPTAAPPTLP) show a composition bias toward pro residues. The helical transmembrane segment at 1111-1131 (FIGLMCAIALLVLILLIVCFI) threads the bilayer. Residues 1132 to 1240 (KRSRGGKYPV…SPVNAIYSLA (109 aa)) are Cytoplasmic-facing. The disordered stretch occupies residues 1141-1240 (VREKKDVPLG…SPVNAIYSLA (100 aa)). Residues 1154-1165 (PKEEDGSFDYSD) show a composition bias toward acidic residues. 7 positions are modified to phosphoserine: Ser1160, Ser1174, Ser1187, Ser1190, Ser1226, Ser1227, and Ser1231. Over residues 1171 to 1184 (LQGSQTSLDGTIKQ) the composition is skewed to polar residues.

This sequence belongs to the immunoglobulin superfamily. L1/neurofascin/NgCAM family. As to quaternary structure, horseshoe-shaped homodimer. Probable constituent of a NFASC/NRCAM/ankyrin-G complex. Associates with the sodium channel beta-1 (SCN1B) and beta-3 (SCN3B) subunits. Interacts with GLDN/gliomedin. Interacts with MYOC.

The protein resides in the cell membrane. Its function is as follows. Cell adhesion, ankyrin-binding protein which may be involved in neurite extension, axonal guidance, synaptogenesis, myelination and neuron-glial cell interactions. In Mus musculus (Mouse), this protein is Neurofascin (Nfasc).